The following is a 1210-amino-acid chain: Epidermal growth factor receptor (1210 aa).

Residues 1–24 (MRPSGTAGAALLALLAALCPASRA) form the signal peptide. Residues 25-645 (LEEKKVCQGT…CPTNGPKIPS (621 aa)) lie on the Extracellular side of the membrane. C31 and C58 are disulfide-bonded. N-linked (GlcNAc...) (complex) asparagine; atypical; partial glycosylation occurs at N56. Residue N73 is glycosylated (N-linked (GlcNAc...) asparagine; atypical). Residues 75-300 (DLSFLKTIQE…CVKKCPRNYV (226 aa)) form an Approximate repeat. N-linked (GlcNAc...) asparagine glycans are attached at residues N128, N175, and N196. 13 disulfides stabilise this stretch: C157-C187, C190-C199, C194-C207, C215-C223, C219-C231, C232-C240, C236-C248, C251-C260, C264-C291, C295-C307, C311-C326, C329-C333, and C337-C362. S229 bears the Phosphoserine mark. 4 N-linked (GlcNAc...) asparagine glycosylation sites follow: N352, N361, N413, and N444. One copy of the Approximate repeat lies at 390–600 (QELDILKTVK…CVKTCPAGVM (211 aa)). 11 cysteine pairs are disulfide-bonded: C470–C499, C506–C515, C510–C523, C526–C535, C539–C555, C558–C571, C562–C579, C582–C591, C595–C617, C620–C628, and C624–C636. N-linked (GlcNAc...) asparagine glycosylation is present at N528. A glycan (N-linked (GlcNAc...) asparagine; partial) is linked at N568. N603 carries an N-linked (GlcNAc...) asparagine; partial glycan. The N-linked (GlcNAc...) (high mannose) asparagine glycan is linked to N623. A helical membrane pass occupies residues 646-668 (IATGMVGALLLLLVVALGIGLFM). The Cytoplasmic portion of the chain corresponds to 669–1210 (RRRHIVRKRT…APQSSEFIGA (542 aa)). T678 carries the phosphothreonine; by PKC and PKD/PRKD1 modification. An important for dimerization, phosphorylation and activation region spans residues 688–704 (LVEPLTPSGEAPNQALL). T693 is subject to Phosphothreonine; by PKD/PRKD1. S695 is subject to Phosphoserine. In terms of domain architecture, Protein kinase spans 712-979 (FKKIKVLGSG…KMARDPQRYL (268 aa)). K716 participates in a covalent cross-link: Glycyl lysine isopeptide (Lys-Gly) (interchain with G-Cter in ubiquitin). 718–726 (LGSGAFGTV) is an ATP binding site. A Glycyl lysine isopeptide (Lys-Gly) (interchain with G-Cter in ubiquitin) cross-link involves residue K737. K745 is a binding site for ATP. K745 carries the post-translational modification N6-(2-hydroxyisobutyryl)lysine. Residues K754 and K757 each participate in a glycyl lysine isopeptide (Lys-Gly) (interchain with G-Cter in ubiquitin) cross-link. 790 to 791 (TQ) contacts ATP. D837 acts as the Proton acceptor in catalysis. D855 lines the ATP pocket. A Glycyl lysine isopeptide (Lys-Gly) (interchain with G-Cter in ubiquitin) cross-link involves residue K867. At Y869 the chain carries Phosphotyrosine. Glycyl lysine isopeptide (Lys-Gly) (interchain with G-Cter in ubiquitin) cross-links involve residues K929, K960, and K970. A phosphoserine mark is found at S991 and S995. 2 positions are modified to phosphotyrosine; by autocatalysis: Y998 and Y1016. A phosphoserine mark is found at S1026 and S1039. At T1041 the chain carries Phosphothreonine. A Phosphoserine modification is found at S1042. The S-palmitoyl cysteine moiety is linked to residue C1049. At S1064 the chain carries Phosphoserine. Y1069 is modified (phosphotyrosine). A phosphoserine mark is found at S1070, S1071, and S1081. Phosphotyrosine; by autocatalysis occurs at positions 1092 and 1110. A disordered region spans residues 1097–1137 (VPKRPAGSVQNPVYHNQPLNPAPSRDPHYQDPHSTAVGNPE). Composition is skewed to polar residues over residues 1104–1115 (SVQNPVYHNQPL) and 1128–1137 (PHSTAVGNPE). A lipid anchor (S-palmitoyl cysteine) is attached at C1146. The residue at position 1166 (S1166) is a Phosphoserine. 2 positions are modified to phosphotyrosine; by autocatalysis: Y1172 and Y1197. R1199 carries the post-translational modification Omega-N-methylarginine.

The protein belongs to the protein kinase superfamily. Tyr protein kinase family. EGF receptor subfamily. As to quaternary structure, binding of the ligand triggers homo- and/or heterodimerization of the receptor triggering its autophosphorylation. Heterodimer with ERBB2. Forms a complex with CCDC88A/GIV (via SH2-like regions) and GNAI3 which leads to enhanced EGFR signaling and triggering of cell migration; binding to CCDC88A requires autophosphorylation of the EGFR C-terminal region, and ligand stimulation is required for recruitment of GNAI3 to the complex. Interacts with ERRFI1; inhibits dimerization of the kinase domain and autophosphorylation. Part of a complex with ERBB2 and either PIK3C2A or PIK3C2B. Interacts with GRB2; an adapter protein coupling the receptor to downstream signaling pathways. Interacts with GAB2; involved in signaling downstream of EGFR. Interacts with STAT3; mediates EGFR downstream signaling in cell proliferation. Interacts with RIPK1; involved in NF-kappa-B activation. Interacts (autophosphorylated) with CBL, CBLB and CBLC; involved in EGFR ubiquitination and regulation; interaction with CBL is reduced in the presence of tensin TNS4. Interacts with SOCS5; regulates EGFR degradation through ELOC- and ELOB-mediated ubiquitination and proteasomal degradation. Interacts with PRMT5; methylates EGFR and enhances interaction with PTPN6. Interacts (phosphorylated) with PTPN6; inhibits EGFR-dependent activation of MAPK/ERK. Interacts with COPG1; essential for regulation of EGF-dependent nuclear transport of EGFR by retrograde trafficking from the Golgi to the ER. Interacts with TNK2; this interaction is dependent on EGF stimulation and kinase activity of EGFR. Interacts with PCNA; positively regulates PCNA. Interacts with PELP1. Interacts with MUC1. Interacts with AP2M1. Interacts with FER. May interact with EPS8; mediates EPS8 phosphorylation. Interacts (via SH2 domains) with GRB2, NCK1 and NCK2. Interacts with ATXN2. Interacts with GAREM1. Interacts (ubiquitinated) with ANKRD13A/B/D; the interaction is direct and may regulate EGFR internalization after EGF stimulation. Interacts with GPER1; the interaction occurs in an estrogen-dependent manner. Interacts (via C-terminal cytoplasmic kinase domain) with ZPR1 (via zinc fingers). Interacts with RNF115 and RNF126. Interacts with GPRC5A (via its transmembrane domain). Interacts with FAM83B; positively regulates EGFR inducing its autophosphorylation in absence of stimulation by EGF. Interacts with LAPTM4B; positively correlates with EGFR activation. Interacts with STX19. Interacts with CD44. Interacts with PGRMC1; the interaction requires PGRMC1 homodimerization. Interacts with PIKFYVE. Interacts with NEU3. Interacts with TRAF4. Interacts with the ant venom OMEGA-myrmeciitoxin(02)-Mg1a. Interacts with CD82; this interaction facilitates ligand-induced endocytosis of the receptor and its subsequent desensitization. Post-translationally, phosphorylated on Tyr residues in response to EGF. Phosphorylation at Ser-695 is partial and occurs only if Thr-693 is phosphorylated. Phosphorylation at Thr-678 and Thr-693 by PRKD1 inhibits EGF-induced MAPK8/JNK1 activation. Dephosphorylation by PTPRJ prevents endocytosis and stabilizes the receptor at the plasma membrane. Autophosphorylation at Tyr-1197 is stimulated by methylation at Arg-1199 and enhances interaction with PTPN6. Autophosphorylation at Tyr-1092 and/or Tyr-1110 recruits STAT3. Dephosphorylated by PTPN1 and PTPN2. Monoubiquitinated and polyubiquitinated upon EGF stimulation; which does not affect tyrosine kinase activity or signaling capacity but may play a role in lysosomal targeting. Polyubiquitin linkage is mainly through 'Lys-63', but linkage through 'Lys-48', 'Lys-11' and 'Lys-29' also occurs. Deubiquitination by OTUD7B prevents degradation. Ubiquitinated by RNF115 and RNF126. Ubiquitinated by ZNRF1 or CBL at different lysines in response to EGF stimulation; leading to recruitment of the ESCRT machinery and subsequent degradation in the lysosomes. Deubiquitinated by UCHL1 leading to the inhibition of its degradation. In terms of processing, palmitoylated on Cys residues by ZDHHC20. Palmitoylation inhibits internalization after ligand binding, and increases the persistence of tyrosine-phosphorylated EGFR at the cell membrane. Palmitoylation increases the amplitude and duration of EGFR signaling. Post-translationally, methylated. Methylation at Arg-1199 by PRMT5 stimulates phosphorylation at Tyr-1197. As to expression, ubiquitously expressed. Isoform 2 is also expressed in ovarian cancers.

It localises to the cell membrane. Its subcellular location is the endoplasmic reticulum membrane. It is found in the golgi apparatus membrane. The protein localises to the nucleus membrane. The protein resides in the endosome. It localises to the endosome membrane. Its subcellular location is the nucleus. It is found in the secreted. The catalysed reaction is L-tyrosyl-[protein] + ATP = O-phospho-L-tyrosyl-[protein] + ADP + H(+). Endocytosis and inhibition of the activated EGFR by phosphatases like PTPRJ and PTPRK constitute immediate regulatory mechanisms. Upon EGF-binding phosphorylates EPS15 that regulates EGFR endocytosis and activity. Moreover, inducible feedback inhibitors including LRIG1, SOCS4, SOCS5 and ERRFI1 constitute alternative regulatory mechanisms for the EGFR signaling. Up-regulated by NEU3-mediated desialylation of N-linked glycan at Asn-528. Its function is as follows. Receptor tyrosine kinase binding ligands of the EGF family and activating several signaling cascades to convert extracellular cues into appropriate cellular responses. Known ligands include EGF, TGFA/TGF-alpha, AREG, epigen/EPGN, BTC/betacellulin, epiregulin/EREG and HBEGF/heparin-binding EGF. Ligand binding triggers receptor homo- and/or heterodimerization and autophosphorylation on key cytoplasmic residues. The phosphorylated receptor recruits adapter proteins like GRB2 which in turn activates complex downstream signaling cascades. Activates at least 4 major downstream signaling cascades including the RAS-RAF-MEK-ERK, PI3 kinase-AKT, PLCgamma-PKC and STATs modules. May also activate the NF-kappa-B signaling cascade. Also directly phosphorylates other proteins like RGS16, activating its GTPase activity and probably coupling the EGF receptor signaling to the G protein-coupled receptor signaling. Also phosphorylates MUC1 and increases its interaction with SRC and CTNNB1/beta-catenin. Positively regulates cell migration via interaction with CCDC88A/GIV which retains EGFR at the cell membrane following ligand stimulation, promoting EGFR signaling which triggers cell migration. Plays a role in enhancing learning and memory performance. Plays a role in mammalian pain signaling (long-lasting hypersensitivity). In terms of biological role, isoform 2 may act as an antagonist of EGF action. Functionally, (Microbial infection) Acts as a receptor for hepatitis C virus (HCV) in hepatocytes and facilitates its cell entry. Mediates HCV entry by promoting the formation of the CD81-CLDN1 receptor complexes that are essential for HCV entry and by enhancing membrane fusion of cells expressing HCV envelope glycoproteins. In Homo sapiens (Human), this protein is Epidermal growth factor receptor.